The chain runs to 177 residues: Large ribosomal subunit protein uL6 (177 aa).

Belongs to the universal ribosomal protein uL6 family. As to quaternary structure, part of the 50S ribosomal subunit.

Functionally, this protein binds to the 23S rRNA, and is important in its secondary structure. It is located near the subunit interface in the base of the L7/L12 stalk, and near the tRNA binding site of the peptidyltransferase center. This Pseudoalteromonas atlantica (strain T6c / ATCC BAA-1087) protein is Large ribosomal subunit protein uL6.